The sequence spans 484 residues: Glutamate--tRNA ligase (484 aa).

The 'HIGH' region motif lies at 11 to 21; sequence PSPTGLLHIGN. Positions 255–259 match the 'KMSKS' region motif; that stretch reads KLSKR. An ATP-binding site is contributed by Lys258.

Belongs to the class-I aminoacyl-tRNA synthetase family. Glutamate--tRNA ligase type 1 subfamily. As to quaternary structure, monomer.

It is found in the cytoplasm. It catalyses the reaction tRNA(Glu) + L-glutamate + ATP = L-glutamyl-tRNA(Glu) + AMP + diphosphate. Catalyzes the attachment of glutamate to tRNA(Glu) in a two-step reaction: glutamate is first activated by ATP to form Glu-AMP and then transferred to the acceptor end of tRNA(Glu). The sequence is that of Glutamate--tRNA ligase from Streptococcus agalactiae serotype V (strain ATCC BAA-611 / 2603 V/R).